A 615-amino-acid chain; its full sequence is Sodium-dependent neutral amino acid transporter B(0)AT3 (615 aa).

Topologically, residues 1–26 (MAQASGMDPLVDIEDERPKWDNKLQY) are cytoplasmic. Residues 27–47 (LLSCIGFAVGLGNIWRFPYLC) form a helical membrane-spanning segment. Residues 48–52 (QTHGG) are Extracellular-facing. The helical transmembrane segment at 53-73 (GAFLIPYFIALVFEGIPLFYI) threads the bilayer. At 74–105 (ELAIGQRLRRGSIGVWKTISPYLGGVGLGCFS) the chain is on the cytoplasmic side. The chain crosses the membrane as a helical span at residues 106 to 126 (VSFLVSLYYNTVLLWVLWFFL). Over 127 to 177 (NSFQHPLPWSTCPLDLNRTGFVQECQSSGTVSYFWYRQTLNITSDISNTGT) the chain is Extracellular. Asparagine 143 and asparagine 167 each carry an N-linked (GlcNAc...) asparagine glycan. Residues 178–198 (IQWKLFLCLVACWSTVYLCVI) form a helical membrane-spanning segment. The Cytoplasmic segment spans residues 199–206 (RGIESTGK). Residues 207–227 (VIYFTALFPYLVLTIFLIRGL) traverse the membrane as a helical segment. Over 228 to 255 (TLPGATEGLIYLFTPNMKTLQNPRVWLD) the chain is Extracellular. A helical transmembrane segment spans residues 256–276 (AATQIFFSLSLAFGGHIAFAS). The Cytoplasmic segment spans residues 277 to 288 (YNPPRNNCEKDA). Residues 289–309 (VIIALVNSMTSLYASIAIFSV) traverse the membrane as a helical segment. Topologically, residues 310–397 (MGFKASNDYG…FTEAVLHMPG (88 aa)) are extracellular. Asparagine 353 is a glycosylation site (N-linked (GlcNAc...) asparagine). The chain crosses the membrane as a helical span at residues 398–418 (ASVWSVLFFGMLFTLGLSSMF). Residues 419–441 (GNMEGVITPLLDMGILPKGIPKE) lie on the Cytoplasmic side of the membrane. A helical transmembrane segment spans residues 442–462 (VMTGVICFACFLSAICFTLQS). At 463–472 (GGYWLEIFDS) the chain is on the extracellular side. A helical transmembrane segment spans residues 473-493 (FAASLNLIIFAFMEVVGVIHI). Topologically, residues 494–520 (YGMKRFCDDIEWMTGRRPGLYWQVTWR) are cytoplasmic. A helical membrane pass occupies residues 521-541 (VVSPMLLFGIFLSYIVLLIQT). The Extracellular segment spans residues 542–570 (PPSYKAWNPQYEHFPSREEKFYPGWVQVT). The helical transmembrane segment at 571–591 (CVLLSFLPSLWVPGVALAQLL) threads the bilayer. The Cytoplasmic segment spans residues 592–615 (SQYKQRWKATHLESGLKLQESRGC).

This sequence belongs to the sodium:neurotransmitter symporter (SNF) (TC 2.A.22) family. SLC6A18 subfamily. As to quaternary structure, interacts with CLTRN; this interaction regulates the trafficking of SLC6A18 to the cell membrane and its activity. Expressed predominantly in kidney.

The protein resides in the apical cell membrane. It is found in the cell membrane. The enzyme catalyses L-alanine(out) + chloride(out) + 2 Na(+)(out) = L-alanine(in) + chloride(in) + 2 Na(+)(in). It catalyses the reaction glycine(out) + chloride(out) + 2 Na(+)(out) = glycine(in) + chloride(in) + 2 Na(+)(in). It carries out the reaction L-methionine(out) + chloride(out) + 2 Na(+)(out) = L-methionine(in) + chloride(in) + 2 Na(+)(in). The catalysed reaction is L-valine(out) + chloride(out) + 2 Na(+)(out) = L-valine(in) + chloride(in) + 2 Na(+)(in). The enzyme catalyses L-isoleucine(out) + chloride(out) + 2 Na(+)(out) = L-isoleucine(in) + chloride(in) + 2 Na(+)(in). It catalyses the reaction L-serine(out) + chloride(out) + 2 Na(+)(out) = L-serine(in) + chloride(in) + 2 Na(+)(in). It carries out the reaction L-leucine(out) + chloride(out) + 2 Na(+)(out) = L-leucine(in) + chloride(in) + 2 Na(+)(in). Its function is as follows. Symporter that transports one amino acid molecule together with two sodium and one chloride ions in kidneys and plays a role in the neutral amino acids reabsorption. Preferentially transports neutral amino acids such as L-glycine and L-alanine but also other neutral amino acids. Required CLTRN for cell surface expression and for its amino acid transporter activity. The transport mechanism is pH-independent. This chain is Sodium-dependent neutral amino acid transporter B(0)AT3, found in Mus musculus (Mouse).